A 119-amino-acid chain; its full sequence is Hemerythrin subunit A (119 aa).

Positions 26, 55, 59, 74, 78, 107, and 112 each coordinate Fe cation.

Belongs to the hemerythrin family.

Hemerythrin is a respiratory protein in blood cells of certain marine worms. The oxygen-binding site in each chain contains two iron atoms. This Sipunculus nudus (Sipunculan worm) protein is Hemerythrin subunit A.